The primary structure comprises 252 residues: Hsp70-Hsp90 organising protein (252 aa).

TPR repeat units lie at residues 7 to 40 (AQRL…DPLD), 41 to 74 (HVLY…KKDW), and 75 to 108 (PKGY…DPNN). Residues 197–239 (EGNDAEERQRQQREEEERRKKKEEEERKKKEEEEMKKQNRTPE) are a coiled coil. The disordered stretch occupies residues 199–252 (NDAEERQRQQREEEERRKKKEEEERKKKEEEEMKKQNRTPEQIQGDEHKLKVMN). Composition is skewed to basic and acidic residues over residues 201 to 233 (AEER…EMKK) and 243 to 252 (GDEHKLKVMN).

Monomer. Homodimer. Forms a complex composed of HOP and chaperones HSP70 and HSP90; the interaction is stronger in the absence of ATP. Interacts (via TPR 1, 2, 3, 7, 8 and 9 repeats) with HSP70 (via C-terminus); the interaction is direct and is stronger in the absence of ATP. Interacts (via TPR 4, 5 and 6 repeats) with HSP90 (via C-terminus); the interaction is direct.

The protein localises to the cytoplasm. Its function is as follows. Acts as a co-chaperone and mediates the association of the chaperones HSP70 and HSP90 probably facilitating substrate transfer from HSP70 to HSP90. Stimulates HSP70 ATPase activity and, in contrast, inhibits HSP90 ATPase activity. The polypeptide is Hsp70-Hsp90 organising protein (Plasmodium falciparum).